We begin with the raw amino-acid sequence, 287 residues long: Small ribosomal subunit protein uS2 (287 aa).

Residues 235–287 (ESGFATGGGDWEATAPAAASGWDDAAAQPQNWDSAAQGAASWDEAAAPKEGQW) form a disordered region. Positions 247–261 (ATAPAAASGWDDAAA) are enriched in low complexity.

The protein belongs to the universal ribosomal protein uS2 family. Component of the small ribosomal subunit. Mature ribosomes consist of a small (40S) and a large (60S) subunit. The 40S subunit contains about 33 different proteins and 1 molecule of RNA (18S). The 60S subunit contains about 49 different proteins and 3 molecules of RNA (25S, 5.8S and 5S). Interacts with RPS21.

It localises to the cytoplasm. Functionally, required for the assembly and/or stability of the 40S ribosomal subunit. Required for the processing of the 20S rRNA-precursor to mature 18S rRNA in a late step of the maturation of 40S ribosomal subunits. This is Small ribosomal subunit protein uS2 from Pyricularia oryzae (strain 70-15 / ATCC MYA-4617 / FGSC 8958) (Rice blast fungus).